Consider the following 217-residue polypeptide: Large ribosomal subunit protein uL1 (217 aa).

This sequence belongs to the universal ribosomal protein uL1 family. In terms of assembly, part of the 50S ribosomal subunit.

Binds directly to 23S rRNA. Probably involved in E site tRNA release. Functionally, protein L1 is also a translational repressor protein, it controls the translation of its operon by binding to its mRNA. The polypeptide is Large ribosomal subunit protein uL1 (Hyperthermus butylicus (strain DSM 5456 / JCM 9403 / PLM1-5)).